Consider the following 179-residue polypeptide: GTP-dependent dephospho-CoA kinase (179 aa).

GTP contacts are provided by aspartate 55, valine 57, aspartate 74, lysine 76, and glutamate 128.

The protein belongs to the GTP-dependent DPCK family.

The catalysed reaction is 3'-dephospho-CoA + GTP = GDP + CoA + H(+). It participates in cofactor biosynthesis; coenzyme A biosynthesis. Functionally, catalyzes the GTP-dependent phosphorylation of the 3'-hydroxyl group of dephosphocoenzyme A to form coenzyme A (CoA). In Saccharolobus islandicus (strain M.16.27) (Sulfolobus islandicus), this protein is GTP-dependent dephospho-CoA kinase.